A 545-amino-acid polypeptide reads, in one-letter code: CTP synthase (545 aa).

The tract at residues 2–266 is amidoligase domain; it reads TTNYIFVTGG…DDYICKRFSL (265 aa). Residue Ser-14 coordinates CTP. Ser-14 contributes to the UTP binding site. Residues 15 to 20 and Asp-72 contribute to the ATP site; that span reads SLGKGI. Mg(2+) is bound by residues Asp-72 and Glu-140. Residues 147-149, 187-192, and Lys-223 each bind CTP; these read DIE and KTKPTQ. UTP is bound by residues 187-192 and Lys-223; that span reads KTKPTQ. An ATP-binding site is contributed by 239-241; sequence KDV. Residues 291–542 form the Glutamine amidotransferase type-1 domain; that stretch reads TIGMVGKYIE…VKAANEHQKR (252 aa). Gly-352 contacts L-glutamine. The Nucleophile; for glutamine hydrolysis role is filled by Cys-379. Residues 380–383, Glu-403, and Arg-470 contribute to the L-glutamine site; that span reads LGMQ. Catalysis depends on residues His-515 and Glu-517.

It belongs to the CTP synthase family. Homotetramer.

The enzyme catalyses UTP + L-glutamine + ATP + H2O = CTP + L-glutamate + ADP + phosphate + 2 H(+). It catalyses the reaction L-glutamine + H2O = L-glutamate + NH4(+). The catalysed reaction is UTP + NH4(+) + ATP = CTP + ADP + phosphate + 2 H(+). It participates in pyrimidine metabolism; CTP biosynthesis via de novo pathway; CTP from UDP: step 2/2. With respect to regulation, allosterically activated by GTP, when glutamine is the substrate; GTP has no effect on the reaction when ammonia is the substrate. The allosteric effector GTP functions by stabilizing the protein conformation that binds the tetrahedral intermediate(s) formed during glutamine hydrolysis. Inhibited by the product CTP, via allosteric rather than competitive inhibition. Its function is as follows. Catalyzes the ATP-dependent amination of UTP to CTP with either L-glutamine or ammonia as the source of nitrogen. Regulates intracellular CTP levels through interactions with the four ribonucleotide triphosphates. This Salmonella typhi protein is CTP synthase.